The chain runs to 218 residues: Small ribosomal subunit protein uS3c (218 aa).

The 74-residue stretch at 47 to 120 (VRTHIKSSSN…KLHIAIEKVA (74 aa)) folds into the KH type-2 domain.

The protein belongs to the universal ribosomal protein uS3 family. As to quaternary structure, part of the 30S ribosomal subunit.

The protein resides in the plastid. Its subcellular location is the chloroplast. The sequence is that of Small ribosomal subunit protein uS3c (rps3) from Picea abies (Norway spruce).